A 268-amino-acid polypeptide reads, in one-letter code: Tetraspanin-33 (268 aa).

Residues 1–23 are Cytoplasmic-facing; it reads MVRKSPGSGKEEDFTFISPVVKY. A helical membrane pass occupies residues 24–44; it reads LLIFFNMLFWVISMVMVGIGV. The Extracellular segment spans residues 45–63; it reads YARLLKHAEAAMACLAVDP. The helical transmembrane segment at 64 to 84 threads the bilayer; that stretch reads ALLLIGVGILMFLITFCGCIG. Over 85 to 95 the chain is Cytoplasmic; sequence SLRENICLLQT. The chain crosses the membrane as a helical span at residues 96 to 116; that stretch reads FSICLTLVFLLQLAVGIVGFI. The Extracellular portion of the chain corresponds to 117-226; that stretch reads FSDKARGKVS…FIHTNGCIDR (110 aa). Cystine bridges form between Cys155-Cys223, Cys156-Cys188, Cys172-Cys182, and Cys189-Cys202. 2 N-linked (GlcNAc...) asparagine glycosylation sites follow: Asn171 and Asn176. The helical transmembrane segment at 227–247 threads the bilayer; that stretch reads LVNWIHSNLFLLGGVALGLAI. At 248–268 the chain is on the cytoplasmic side; sequence PQVTKHLRAKLIYTWRIGIQV.

It belongs to the tetraspanin (TM4SF) family. Homodimer; disulfide-linked.

It is found in the cell membrane. The protein localises to the cell junction. Its subcellular location is the adherens junction. The protein resides in the cytoplasm. Functionally, part of TspanC8 subgroup, composed of 6 members that interact with the transmembrane metalloprotease ADAM10. This interaction is required for ADAM10 exit from the endoplasmic reticulum and for enzymatic maturation and trafficking to the cell surface as well as substrate specificity. Different TspanC8/ADAM10 complexes have distinct substrates. This is Tetraspanin-33 (tspan33) from Xenopus laevis (African clawed frog).